A 132-amino-acid chain; its full sequence is U10-hexatoxin-Hi1a (132 aa).

The signal sequence occupies residues 1–20 (MKGFIVFSLSLCLVFTVCLA). Residues 21–30 (EDELMKEAVR) constitute a propeptide that is removed on maturation.

Contains 5 disulfide bonds. As to expression, expressed by the venom gland.

It localises to the secreted. Probable ion channel inhibitor. The polypeptide is U10-hexatoxin-Hi1a (Hadronyche infensa (Fraser island funnel-web spider)).